The chain runs to 207 residues: Phosphoribosylglycinamide formyltransferase (207 aa).

N(1)-(5-phospho-beta-D-ribosyl)glycinamide is bound at residue 13 to 15; it reads GSN. Residues 100-103 and asparagine 120 each bind (6R)-10-formyltetrahydrofolate; that span reads MHIL. Histidine 122 (proton donor) is an active-site residue. Position 162 (aspartate 162) interacts with (6R)-10-formyltetrahydrofolate. Glutamate 191 is a N(1)-(5-phospho-beta-D-ribosyl)glycinamide binding site.

The protein belongs to the GART family.

The catalysed reaction is N(1)-(5-phospho-beta-D-ribosyl)glycinamide + (6R)-10-formyltetrahydrofolate = N(2)-formyl-N(1)-(5-phospho-beta-D-ribosyl)glycinamide + (6S)-5,6,7,8-tetrahydrofolate + H(+). It functions in the pathway purine metabolism; IMP biosynthesis via de novo pathway; N(2)-formyl-N(1)-(5-phospho-D-ribosyl)glycinamide from N(1)-(5-phospho-D-ribosyl)glycinamide (10-formyl THF route): step 1/1. The sequence is that of Phosphoribosylglycinamide formyltransferase (ade5) from Schizosaccharomyces pombe (strain 972 / ATCC 24843) (Fission yeast).